Consider the following 478-residue polypeptide: Cytochrome c-552 (478 aa).

Residues 1–26 (MTRIKINARRIFSLLIPFFFFTSVHA) form the signal peptide. A heme c-binding site is contributed by His94. Heme is bound by residues Cys122, Cys125, and Lys126. Heme c-binding residues include Cys160, Cys163, His164, Cys209, Cys212, and His213. Positions 215, 216, 261, and 263 each coordinate Ca(2+). Tyr216 is a substrate binding site. His264 serves as a coordination point for substrate. Heme c-binding residues include His275, Cys282, Cys285, His286, His301, Cys314, Cys317, His318, and His393.

This sequence belongs to the cytochrome c-552 family. Requires Ca(2+) as cofactor. The cofactor is heme c.

It is found in the periplasm. It catalyses the reaction 6 Fe(III)-[cytochrome c] + NH4(+) + 2 H2O = 6 Fe(II)-[cytochrome c] + nitrite + 8 H(+). It participates in nitrogen metabolism; nitrate reduction (assimilation). Its function is as follows. Catalyzes the reduction of nitrite to ammonia, consuming six electrons in the process. This Escherichia coli (strain ATCC 8739 / DSM 1576 / NBRC 3972 / NCIMB 8545 / WDCM 00012 / Crooks) protein is Cytochrome c-552.